The chain runs to 644 residues: MNARVEQLEFQAEARQLLDLMVHSVYSNKDSFLRELISNASDALDKLRLEAFRNKDLDVDTSDLHIQIEVDKDARTLTIRDNGIGMTRAEVVDLIGTLAKSGTAELRQQLREAKNAQNEAASEELIGQFGIGFYSSFMVADKVELLTRKAGESEATKWESSGEGTYTIESVENAPQGTSVTLHLKPEDTEDELHDYTSEFKIKSLVKKYSDFIAWPIRMEVERRTPATEEGGEETVTREVETLNSMKALWARPKDEVSEEEYKEFYKHIAHAWDDPLEVIAMKAEGTFEYQALLFIPSHAPFDLFNRDAHTGIQLYVKRVFIMGDCDQLMPEYLRFVKGVVDAQDMSLNVSREILQQDRQIKAIRRRLTKKVLSTIKELQSERLDDYRTFWTQFGRVVKEGLLSDFDNQETLVQLCSFASTHSEEEATTLAQYVERMKEGQTQIFYATGETRQQILKSPHLEAFKAKGYEVLLLTDPVDEVWVGTVTEFDGKPLQSIAKGEVDLSAEGEESQAERDEQQKEFADLLAWLKDTLSDHVKEVRLSNRLTDSPACLITDAFGITPALARLYRASGQDIPVGKRILELNPKHPLVTGLRQAHQDRADDPSVAETAELLYGTALLAEGGALDDPARFAEILADRLARTL.

An a; substrate-binding region spans residues 1 to 352 (MNARVEQLEF…AQDMSLNVSR (352 aa)). The b stretch occupies residues 353-566 (EILQQDRQIK…AFGITPALAR (214 aa)). The segment at 567–644 (LYRASGQDIP…ILADRLARTL (78 aa)) is c.

It belongs to the heat shock protein 90 family. In terms of assembly, homodimer.

Its subcellular location is the cytoplasm. Its function is as follows. Molecular chaperone. Has ATPase activity. The sequence is that of Chaperone protein HtpG from Mycolicibacterium paratuberculosis (strain ATCC BAA-968 / K-10) (Mycobacterium paratuberculosis).